A 415-amino-acid chain; its full sequence is NADH-quinone oxidoreductase subunit D (415 aa).

The protein belongs to the complex I 49 kDa subunit family. As to quaternary structure, NDH-1 is composed of 14 different subunits. Subunits NuoB, C, D, E, F, and G constitute the peripheral sector of the complex.

It localises to the cell inner membrane. It carries out the reaction a quinone + NADH + 5 H(+)(in) = a quinol + NAD(+) + 4 H(+)(out). Its function is as follows. NDH-1 shuttles electrons from NADH, via FMN and iron-sulfur (Fe-S) centers, to quinones in the respiratory chain. The immediate electron acceptor for the enzyme in this species is believed to be ubiquinone. Couples the redox reaction to proton translocation (for every two electrons transferred, four hydrogen ions are translocated across the cytoplasmic membrane), and thus conserves the redox energy in a proton gradient. The polypeptide is NADH-quinone oxidoreductase subunit D (Myxococcus xanthus (strain DK1622)).